A 358-amino-acid chain; its full sequence is Glutamate--cysteine ligase (358 aa).

The protein belongs to the glutamate--cysteine ligase type 2 family. YbdK subfamily.

The catalysed reaction is L-cysteine + L-glutamate + ATP = gamma-L-glutamyl-L-cysteine + ADP + phosphate + H(+). Catalyzes the synthesis of gamma-glutamylcysteine (gamma-GC), the main low-molecular-weight thiol compound instead of glutathione in halophilic archaea. The polypeptide is Glutamate--cysteine ligase (Haloferax volcanii (strain ATCC 29605 / DSM 3757 / JCM 8879 / NBRC 14742 / NCIMB 2012 / VKM B-1768 / DS2) (Halobacterium volcanii)).